We begin with the raw amino-acid sequence, 397 residues long: MSESVHTNTSLWSKGMKAVIVAQFLSAFGDNALLFATLALLKAQFYPEWSQPILQMVFVGAYILFAPFVGQVADSFAKGRVMMFANGLKLLGAASICFGINPFLGYTLVGVGAAAYSPAKYGILGELTTGSKLVKANGLMEASTIAAILLGSVAGGVLADWHILVALVACALAYGGAVVANIYIPKLAAARPGQSWNLISMTRSFLNACTSLWRNGETRFSLVGTSLFWGAGVTLRFLLVLWVPVALGITDNATPTYLNAMVAIGIVVGAGAAAKLVTLETVSRCMPAGILIGVVVLIFSLQHELLPAYALLMLIGVLGGFFVVPLNALLQERGKKSVGAGNAIAVQNLGENSAMLLMLGIYSLAVMVGIPVVPIGIGFGALFALAITALWIWQRRH.

The Periplasmic portion of the chain corresponds to 1–17 (MSESVHTNTSLWSKGMK). The chain crosses the membrane as a helical span at residues 18-38 (AVIVAQFLSAFGDNALLFATL). The Cytoplasmic portion of the chain corresponds to 39–52 (ALLKAQFYPEWSQP). The chain crosses the membrane as a helical span at residues 53–73 (ILQMVFVGAYILFAPFVGQVA). The Periplasmic segment spans residues 74-90 (DSFAKGRVMMFANGLKL). The helical transmembrane segment at 91 to 111 (LGAASICFGINPFLGYTLVGV) threads the bilayer. Residues 112–144 (GAAAYSPAKYGILGELTTGSKLVKANGLMEAST) lie on the Cytoplasmic side of the membrane. Residues 145–165 (IAAILLGSVAGGVLADWHILV) form a helical membrane-spanning segment. Residue Ala166 is a topological domain, periplasmic. The helical transmembrane segment at 167 to 187 (LVACALAYGGAVVANIYIPKL) threads the bilayer. Topologically, residues 188 to 226 (AAARPGQSWNLISMTRSFLNACTSLWRNGETRFSLVGTS) are cytoplasmic. Residues 227-247 (LFWGAGVTLRFLLVLWVPVAL) traverse the membrane as a helical segment. The Periplasmic portion of the chain corresponds to 248-256 (GITDNATPT). The chain crosses the membrane as a helical span at residues 257–277 (YLNAMVAIGIVVGAGAAAKLV). Residues 278–280 (TLE) lie on the Cytoplasmic side of the membrane. Residues 281-301 (TVSRCMPAGILIGVVVLIFSL) form a helical membrane-spanning segment. Topologically, residues 302–304 (QHE) are periplasmic. A helical transmembrane segment spans residues 305 to 325 (LLPAYALLMLIGVLGGFFVVP). At 326-343 (LNALLQERGKKSVGAGNA) the chain is on the cytoplasmic side. The helical transmembrane segment at 344–364 (IAVQNLGENSAMLLMLGIYSL) threads the bilayer. At 365 to 366 (AV) the chain is on the periplasmic side. The helical transmembrane segment at 367–387 (MVGIPVVPIGIGFGALFALAI) threads the bilayer. The Cytoplasmic portion of the chain corresponds to 388 to 397 (TALWIWQRRH).

This sequence belongs to the major facilitator superfamily. LplT (TC 2.A.1.42) family.

Its subcellular location is the cell inner membrane. Its function is as follows. Catalyzes the facilitated diffusion of 2-acyl-glycero-3-phosphoethanolamine (2-acyl-GPE) into the cell. This Escherichia coli O81 (strain ED1a) protein is Lysophospholipid transporter LplT.